A 207-amino-acid polypeptide reads, in one-letter code: ATP-dependent Clp protease proteolytic subunit (207 aa).

The active-site Nucleophile is S111. The active site involves H136.

This sequence belongs to the peptidase S14 family. As to quaternary structure, fourteen ClpP subunits assemble into 2 heptameric rings which stack back to back to give a disk-like structure with a central cavity, resembling the structure of eukaryotic proteasomes.

It is found in the cytoplasm. The enzyme catalyses Hydrolysis of proteins to small peptides in the presence of ATP and magnesium. alpha-casein is the usual test substrate. In the absence of ATP, only oligopeptides shorter than five residues are hydrolyzed (such as succinyl-Leu-Tyr-|-NHMec, and Leu-Tyr-Leu-|-Tyr-Trp, in which cleavage of the -Tyr-|-Leu- and -Tyr-|-Trp bonds also occurs).. In terms of biological role, cleaves peptides in various proteins in a process that requires ATP hydrolysis. Has a chymotrypsin-like activity. Plays a major role in the degradation of misfolded proteins. This is ATP-dependent Clp protease proteolytic subunit from Aeromonas salmonicida (strain A449).